Reading from the N-terminus, the 261-residue chain is tRNA pseudouridine synthase A (261 aa).

The active-site Nucleophile is aspartate 51. Residue tyrosine 109 coordinates substrate.

This sequence belongs to the tRNA pseudouridine synthase TruA family. Homodimer.

It catalyses the reaction uridine(38/39/40) in tRNA = pseudouridine(38/39/40) in tRNA. In terms of biological role, formation of pseudouridine at positions 38, 39 and 40 in the anticodon stem and loop of transfer RNAs. The protein is tRNA pseudouridine synthase A of Shewanella frigidimarina (strain NCIMB 400).